Consider the following 372-residue polypeptide: Flagellar P-ring protein (372 aa).

Residues Met-1 to Ala-26 form the signal peptide.

This sequence belongs to the FlgI family. In terms of assembly, the basal body constitutes a major portion of the flagellar organelle and consists of four rings (L,P,S, and M) mounted on a central rod.

It is found in the periplasm. It localises to the bacterial flagellum basal body. Assembles around the rod to form the L-ring and probably protects the motor/basal body from shearing forces during rotation. This Xanthomonas axonopodis pv. citri (strain 306) protein is Flagellar P-ring protein.